The primary structure comprises 574 residues: M-phase inducer phosphatase 2 (574 aa).

2 disordered regions span residues 31–51 and 90–110; these read GFGF…SSSP and RRTS…AGLC. Ser42 bears the Phosphoserine mark. The span at 90–105 shows a compositional bias: low complexity; that stretch reads RRTSECSLSSESSESS. At Ser166 the chain carries Phosphoserine; by MELK. A Phosphoserine modification is found at Ser246. The residue at position 319 (Ser319) is a Phosphoserine; by MAPKAPK2 and MELK. Ser319 is modified (phosphoserine; by MELK and MAPK14). The tract at residues 339–359 is disordered; it reads DVPVLSKRRKSGTPLEEQQLE. Ser349 is modified (phosphoserine; by AURKA). Position 370 is a phosphoserine; by BRSK1 and MAPK14 (Ser370). The Rhodanese domain occupies 425-532; sequence IVEKFVIVDC…FFPQHPNFCE (108 aa). Cys481 is a catalytic residue. Residue Ser557 is modified to Phosphoserine.

The protein belongs to the MPI phosphatase family. Interacts with MAPK14 and 14-3-3 proteins. Post-translationally, phosphorylated by BRSK1 in vitro. Phosphorylated by CHEK1, which inhibits the activity of this protein. Phosphorylation at Ser-349 by AURKA might locally participate in the control of the onset of mitosis. Phosphorylation by MELK at Ser-166 promotes localization to the centrosome and the spindle poles during mitosis. Phosphorylation at Ser-319 and Ser-370 by MAPK14 is required for binding to 14-3-3 proteins.

It is found in the cytoplasm. It localises to the cytoskeleton. Its subcellular location is the microtubule organizing center. The protein localises to the centrosome. The protein resides in the spindle pole. The catalysed reaction is O-phospho-L-tyrosyl-[protein] + H2O = L-tyrosyl-[protein] + phosphate. With respect to regulation, stimulated by B-type cyclins. Its function is as follows. Tyrosine protein phosphatase which functions as a dosage-dependent inducer of mitotic progression. Directly dephosphorylates CDK1 and stimulates its kinase activity. Required for G2/M phases of the cell cycle progression and abscission during cytokinesis in a ECT2-dependent manner. The three isoforms seem to have a different level of activity. This Rattus norvegicus (Rat) protein is M-phase inducer phosphatase 2 (Cdc25b).